A 282-amino-acid polypeptide reads, in one-letter code: Heat stress transcription factor A-6a (282 aa).

Residues 17–111 (PTAFLTKTYN…LLKNIKRRKT (95 aa)) mediate DNA binding. The hydrophobic repeat HR-A/B stretch occupies residues 111 to 177 (TSSQTQTQSL…MMMNFLLKKI (67 aa)). A Bipartite nuclear localization signal motif is present at residues 175–190 (KKIKKPSFLQSLRKRN). The AHA motif lies at 261-270 (EGIWKGFVLS).

It belongs to the HSF family. Class A subfamily. As to quaternary structure, homotrimer. Post-translationally, exhibits temperature-dependent phosphorylation.

The protein resides in the nucleus. Transcriptional activator that specifically binds DNA sequence 5'-AGAAnnTTCT-3' known as heat shock promoter elements (HSE). This is Heat stress transcription factor A-6a (HSFA6A) from Arabidopsis thaliana (Mouse-ear cress).